The following is a 145-amino-acid chain: Small ribosomal subunit protein bS6 (145 aa).

Residues Glu113 to Glu132 are compositionally biased toward basic and acidic residues. A disordered region spans residues Glu113–Glu145. Residues Glu133–Glu145 show a composition bias toward acidic residues.

The protein belongs to the bacterial ribosomal protein bS6 family.

In terms of biological role, binds together with bS18 to 16S ribosomal RNA. The sequence is that of Small ribosomal subunit protein bS6 from Campylobacter hominis (strain ATCC BAA-381 / DSM 21671 / CCUG 45161 / LMG 19568 / NCTC 13146 / CH001A).